Consider the following 406-residue polypeptide: S-adenosylmethionine synthase (406 aa).

Residue histidine 17 coordinates ATP. Aspartate 19 provides a ligand contact to Mg(2+). Residue glutamate 45 participates in K(+) binding. 2 residues coordinate L-methionine: glutamate 58 and glutamine 101. Residues 101–111 form a flexible loop region; sequence QSAEINQGVAR. Residues 178–180, aspartate 258, 264–265, alanine 281, and lysine 285 contribute to the ATP site; these read DGK and RK. Aspartate 258 is a binding site for L-methionine. Residue lysine 289 participates in L-methionine binding.

It belongs to the AdoMet synthase family. As to quaternary structure, homotetramer; dimer of dimers. Mg(2+) is required as a cofactor. Requires K(+) as cofactor.

The protein resides in the cytoplasm. The enzyme catalyses L-methionine + ATP + H2O = S-adenosyl-L-methionine + phosphate + diphosphate. The protein operates within amino-acid biosynthesis; S-adenosyl-L-methionine biosynthesis; S-adenosyl-L-methionine from L-methionine: step 1/1. Catalyzes the formation of S-adenosylmethionine (AdoMet) from methionine and ATP. The overall synthetic reaction is composed of two sequential steps, AdoMet formation and the subsequent tripolyphosphate hydrolysis which occurs prior to release of AdoMet from the enzyme. The polypeptide is S-adenosylmethionine synthase (Bifidobacterium longum subsp. infantis (strain ATCC 15697 / DSM 20088 / JCM 1222 / NCTC 11817 / S12)).